A 127-amino-acid chain; its full sequence is Fluoride-specific ion channel FluC (127 aa).

4 consecutive transmembrane segments (helical) span residues 4 to 24 (LLLA…MLSM), 35 to 55 (IGTL…FAWF), 71 to 91 (TGFC…VFLL), and 103 to 123 (VLIN…LFSA). Na(+) is bound by residues Gly75 and Thr78.

The protein belongs to the fluoride channel Fluc/FEX (TC 1.A.43) family.

It localises to the cell inner membrane. It carries out the reaction fluoride(in) = fluoride(out). Na(+) is not transported, but it plays an essential structural role and its presence is essential for fluoride channel function. Its function is as follows. Fluoride-specific ion channel. Important for reducing fluoride concentration in the cell, thus reducing its toxicity. This is Fluoride-specific ion channel FluC from Salmonella agona (strain SL483).